Here is a 292-residue protein sequence, read N- to C-terminus: Recombination-promoting nuclease RpnA (292 aa).

This sequence belongs to the Rpn/YhgA-like nuclease family. Mg(2+) is required as a cofactor.

Its activity is regulated as follows. Inhibited by EDTA, Zn(2+) and by Mg(2+) plus Mn(2+); stimulated by Ca(2+) in the presence of Mg(2+). A low activity DNA endonuclease yielding 3'-hydroxyl ends, equally active on ss or dsDNA, not active on dsRNA. Shows no sequence specificity. Upon expression enhances RecA-independent DNA recombination 49-fold, concomitantly reducing viability by 88% and probably inducing DNA damage as measured by induction of the SOS repair response in RecA cells. RecA-independent DNA recombination leads to replacement of recipient genes with large segments of donor DNA rather than DNA addition to the donor strain; increased expression of RpnA leads to smaller replacement segments, suggesting this protein may play a role in generating crossover events. This chain is Recombination-promoting nuclease RpnA, found in Escherichia coli (strain K12).